A 212-amino-acid chain; its full sequence is Redox-sensing transcriptional repressor Rex (212 aa).

Residues 17-56 constitute a DNA-binding region (H-T-H motif); sequence KYHRYLQELMENDIDRISSKELSEKIGFTASQIRQDLNCF. 91–96 contributes to the NAD(+) binding site; sequence GAGNIG.

This sequence belongs to the transcriptional regulatory Rex family. In terms of assembly, homodimer.

It is found in the cytoplasm. Its function is as follows. Modulates transcription in response to changes in cellular NADH/NAD(+) redox state. In Clostridium perfringens (strain SM101 / Type A), this protein is Redox-sensing transcriptional repressor Rex.